Consider the following 251-residue polypeptide: uncharacterized protein (251 aa).

The RING-type zinc finger occupies 192–238; that stretch reads CMMCVQRGDERVAITTPYTTDCGHTYCYACIMSRLKLVNNVSCPICK.

The protein localises to the cytoplasm. This is an uncharacterized protein from Schizosaccharomyces pombe (strain 972 / ATCC 24843) (Fission yeast).